The chain runs to 195 residues: MLKTNQKNVHAFEIEKQEPEAVMEFLEKNHALLQYFLIIFKYDIEPEVKAILRKHQLLFLETNRALNGRHIKTMSLKEETDHPKPNHSKTEPKTTIYERHIRSGEEIYSANHLIFLGNIHNGAKIISEGCVSVYGVCEGAIVCFGECLILKEVKSAQIVFQNQILSLKEVERLLVNKNIKIITKNDDILDIKEVL.

This sequence belongs to the MinC family. In terms of assembly, interacts with MinD and FtsZ.

Its function is as follows. Cell division inhibitor that blocks the formation of polar Z ring septums. Rapidly oscillates between the poles of the cell to destabilize FtsZ filaments that have formed before they mature into polar Z rings. Prevents FtsZ polymerization. This Helicobacter pylori (strain G27) protein is Probable septum site-determining protein MinC.